The following is a 58-amino-acid chain: Large ribosomal subunit protein bL33 (58 aa).

This sequence belongs to the bacterial ribosomal protein bL33 family.

This Brachyspira hyodysenteriae (strain ATCC 49526 / WA1) protein is Large ribosomal subunit protein bL33.